The following is a 622-amino-acid chain: Histone-arginine methyltransferase CARMER (622 aa).

The SAM-dependent MTase PRMT-type domain occupies 118–425 (ASQYFQFYGY…QRQSYDVEID (308 aa)). Positions 131, 140, 164, 186, 215, and 243 each coordinate S-adenosyl-L-methionine. Arginine 478 carries the post-translational modification Asymmetric dimethylarginine; by autocatalysis. Disordered stretches follow at residues 513–556 (ANGG…QQQQ) and 602–622 (QPILNSHHHHPGQPIHGNQFY). The span at 536 to 556 (QQQQQQQQQQQQAAVGPQQQQ) shows a compositional bias: low complexity.

This sequence belongs to the class I-like SAM-binding methyltransferase superfamily. Protein arginine N-methyltransferase family. As to quaternary structure, homodimer. Post-translationally, the dimethylated protein is the major form.

It localises to the cytoplasm. The protein localises to the nucleus. It carries out the reaction L-arginyl-[protein] + 2 S-adenosyl-L-methionine = N(omega),N(omega)-dimethyl-L-arginyl-[protein] + 2 S-adenosyl-L-homocysteine + 2 H(+). Functionally, methylates (mono- and asymmetric dimethylation) the guanidino nitrogens of arginyl residues in proteins. May methylate histone H3 at 'Arg-17' and activate transcription via chromatin remodeling. This chain is Histone-arginine methyltransferase CARMER, found in Anopheles gambiae (African malaria mosquito).